Reading from the N-terminus, the 139-residue chain is Large ribosomal subunit protein uL16 (139 aa).

Residues 1–17 (MLQPKRTKYRKQQKGRM) show a composition bias toward basic residues. The interval 1–25 (MLQPKRTKYRKQQKGRMKGLSQRGH) is disordered.

It belongs to the universal ribosomal protein uL16 family. In terms of assembly, part of the 50S ribosomal subunit.

Functionally, binds 23S rRNA and is also seen to make contacts with the A and possibly P site tRNAs. In Christiangramia forsetii (strain DSM 17595 / CGMCC 1.15422 / KT0803) (Gramella forsetii), this protein is Large ribosomal subunit protein uL16.